We begin with the raw amino-acid sequence, 325 residues long: MAAEDFALPADHNPLDTDLLNVFCWVAKTQSFSRAAAELGTSQPVITRKIGRLEECLGVALFVRSNRGCVLTAAGTVLIGKAPSILLQLAEIKEEVSHSASVVSGSLSMGITHAASTVMAPRLLPVIARRWPKLQVDVMEALSRTLVERVLHGELALAVLFDPPPHPDLICRPLLIERLCLVGNPQSDLRTMAPPTIRDLARLPLMLPSGGQIIRNLLEDAFAEINEPLKPVYEAASMAMLREMAVQGIGYTLLTQGGVAEDVAAGKLIAQALPDKGMVVTLTLITKRESTRLRNVRLLSDFVASEIRAVARQGQWPGHPTVVGG.

An HTH lysR-type domain is found at Leu15–Thr72. The H-T-H motif DNA-binding region spans Phe32–Gly51.

Belongs to the LysR transcriptional regulatory family.

The chain is HTH-type transcriptional regulator BbuR (bbuR) from Bordetella bronchiseptica (strain ATCC BAA-588 / NCTC 13252 / RB50) (Alcaligenes bronchisepticus).